A 163-amino-acid polypeptide reads, in one-letter code: Putative NOL1/NOP2/Sun domain family member 5B (163 aa).

Residue Cys93 is the Nucleophile of the active site.

This sequence belongs to the class I-like SAM-binding methyltransferase superfamily. RsmB/NOP family. Ubiquitous.

The protein is Putative NOL1/NOP2/Sun domain family member 5B (NSUN5P1) of Homo sapiens (Human).